We begin with the raw amino-acid sequence, 407 residues long: Na(+)-translocating NADH-quinone reductase subunit F (407 aa).

Residues 3–23 (IILGVVMFTLIVLALTVMILF) form a helical membrane-spanning segment. Positions 32 to 126 (GDITVEINED…NLKIELPEEI (95 aa)) constitute a 2Fe-2S ferredoxin-type domain. 4 residues coordinate [2Fe-2S] cluster: cysteine 69, cysteine 75, cysteine 78, and cysteine 110. The FAD-binding FR-type domain maps to 129–269 (VKKWTCEVIS…SGPFGEFFAK (141 aa)).

It belongs to the NqrF family. As to quaternary structure, composed of six subunits; NqrA, NqrB, NqrC, NqrD, NqrE and NqrF. Requires [2Fe-2S] cluster as cofactor. The cofactor is FAD.

The protein resides in the cell inner membrane. The catalysed reaction is a ubiquinone + n Na(+)(in) + NADH + H(+) = a ubiquinol + n Na(+)(out) + NAD(+). NQR complex catalyzes the reduction of ubiquinone-1 to ubiquinol by two successive reactions, coupled with the transport of Na(+) ions from the cytoplasm to the periplasm. The first step is catalyzed by NqrF, which accepts electrons from NADH and reduces ubiquinone-1 to ubisemiquinone by a one-electron transfer pathway. This chain is Na(+)-translocating NADH-quinone reductase subunit F, found in Yersinia pseudotuberculosis serotype O:1b (strain IP 31758).